Reading from the N-terminus, the 619-residue chain is Nuclear hormone receptor family member nhr-6 (619 aa).

Residues 1 to 18 show a composition bias toward polar residues; it reads MEQLSIQTDELQDQFSNC. Disordered stretches follow at residues 1–29, 58–86, 103–134, and 196–232; these read MEQL…SYSS, MSKN…SKTT, QVNT…HRLP, and QHFP…PTSP. A compositionally biased stretch (low complexity) spans 19–29; that stretch reads SPASVDSSYSS. The segment covering 125 to 134 has biased composition (polar residues); the sequence is KPSSSSHRLP. The segment covering 206-232 has biased composition (low complexity); it reads GSQGTTSSSNNTGGTPSPHSSSLPTSP. Residues 265 to 340 constitute a DNA-binding region (nuclear receptor); sequence DKMCAVCNDR…VGMVKEIVRH (76 aa). 2 NR C4-type zinc fingers span residues 268-288 and 304-328; these read CAVC…CEGC and CAGN…YQKC. Residues 345 to 365 form a disordered region; the sequence is GRRGRLSSKTKLARSEDQPSP. A compositionally biased stretch (basic residues) spans 346-356; the sequence is RRGRLSSKTKL. Residues 365–600 form the NR LBD domain; the sequence is PPLPLLALMG…STDAPPACGS (236 aa). The tract at residues 589-600 is AF-2; sequence LRSTDAPPACGS.

This sequence belongs to the nuclear hormone receptor family. NR4 subfamily. As to expression, in hermaphrodites, expressed in the developing spermatheca and dorsal uterus. Expression includes the 8 cells of the dorsal somatic gonad primordium and the sujc cells that form the core of the spermatheca-uterine valve. Expressed in the precursor cells of the spermatheca-sheath lineages (SS cells) and in the precursors and descendents of the dorsal-uterine lineage (DU cells). In both hermaphroditic and male animals, expressed in a pair of head chemosensory neurons.

Its subcellular location is the nucleus. In terms of biological role, transcriptional activator that induces gene expression by binding to the NGFI-B response element (NBRE) 5'-AAAGGTCA-3'. Required for proper morphogenesis of the spermatheca and the spermatheca-uterine valve formation. Promotes cell proliferation and differentiation of the spermatheca precursor cells during spermatheca development in larval stage L4. Might play a role in promoting G1/S phase progression in the spermatheca precursor cell lineage. Also required for the differentiation of the spermatheca-uterine junction core (sujc) cells which are generating the spermatheca-uterine valve. This chain is Nuclear hormone receptor family member nhr-6 (nhr-6), found in Caenorhabditis elegans.